The chain runs to 252 residues: 5-oxoprolinase subunit A 1 (252 aa).

It belongs to the LamB/PxpA family. Forms a complex composed of PxpA, PxpB and PxpC.

The enzyme catalyses 5-oxo-L-proline + ATP + 2 H2O = L-glutamate + ADP + phosphate + H(+). Functionally, catalyzes the cleavage of 5-oxoproline to form L-glutamate coupled to the hydrolysis of ATP to ADP and inorganic phosphate. The polypeptide is 5-oxoprolinase subunit A 1 (Bordetella bronchiseptica (strain ATCC BAA-588 / NCTC 13252 / RB50) (Alcaligenes bronchisepticus)).